Reading from the N-terminus, the 145-residue chain is Ribosome maturation factor RimP (145 aa).

This sequence belongs to the RimP family.

The protein localises to the cytoplasm. Its function is as follows. Required for maturation of 30S ribosomal subunits. The sequence is that of Ribosome maturation factor RimP from Borreliella burgdorferi (strain ATCC 35210 / DSM 4680 / CIP 102532 / B31) (Borrelia burgdorferi).